A 303-amino-acid polypeptide reads, in one-letter code: Acetylglutamate kinase (303 aa).

Residues 69–70, Arg91, and Asn190 each bind substrate; that span reads GG.

This sequence belongs to the acetylglutamate kinase family. ArgB subfamily.

It localises to the cytoplasm. The catalysed reaction is N-acetyl-L-glutamate + ATP = N-acetyl-L-glutamyl 5-phosphate + ADP. Its pathway is amino-acid biosynthesis; L-arginine biosynthesis; N(2)-acetyl-L-ornithine from L-glutamate: step 2/4. Functionally, catalyzes the ATP-dependent phosphorylation of N-acetyl-L-glutamate. The sequence is that of Acetylglutamate kinase from Nocardia farcinica (strain IFM 10152).